Reading from the N-terminus, the 328-residue chain is BURP domain-containing protein 11 (328 aa).

In terms of domain architecture, BURP spans 74 to 318; sequence FFFRDALRPG…TKLSIVWVPR (245 aa).

In terms of tissue distribution, expressed in roots.

This is BURP domain-containing protein 11 (BURP11) from Oryza sativa subsp. japonica (Rice).